Consider the following 56-residue polypeptide: Protein SspF (56 aa).

This sequence belongs to the alpha/beta-type SASP family.

May play some important role in either sporulation or the dormant spore. The protein is Protein SspF (sspF) of Priestia megaterium (strain ATCC 12872 / QMB1551) (Bacillus megaterium).